We begin with the raw amino-acid sequence, 68 residues long: MKASDVRDMTPDQLQDELLKLKKTQFNLRFQGASGQLEKVHQMRQVRRDIARIKTIQRQRSAETASKS.

The protein belongs to the universal ribosomal protein uL29 family.

This is Large ribosomal subunit protein uL29 from Parvibaculum lavamentivorans (strain DS-1 / DSM 13023 / NCIMB 13966).